The chain runs to 561 residues: Asparagine synthetase [glutamine-hydrolyzing] (561 aa).

Residue cysteine 2 is the For GATase activity of the active site. Residues 2–191 (CGIWALFGSD…PGHYEVLDLK (190 aa)) form the Glutamine amidotransferase type-2 domain. L-glutamine-binding positions include 49-53 (RLAVV), 75-77 (NGE), and aspartate 97. Residues 213–536 (HAACDTVGNL…PGRSSWLPHY (324 aa)) form the Asparagine synthetase domain. ATP-binding positions include leucine 256, isoleucine 288, and 363-364 (SG).

The enzyme catalyses L-aspartate + L-glutamine + ATP + H2O = L-asparagine + L-glutamate + AMP + diphosphate + H(+). It functions in the pathway amino-acid biosynthesis; L-asparagine biosynthesis; L-asparagine from L-aspartate (L-Gln route): step 1/1. The sequence is that of Asparagine synthetase [glutamine-hydrolyzing] (ASNS) from Gallus gallus (Chicken).